The primary structure comprises 427 residues: Kallistatin (427 aa).

The signal sequence occupies residues Met1–Gly20. N-linked (GlcNAc...) asparagine glycans are attached at residues Asn33, Asn108, Asn157, and Asn238.

Belongs to the serpin family. In terms of assembly, monomer and some homodimers.

It localises to the secreted. Functionally, inhibits human amidolytic and kininogenase activities of tissue kallikrein. The sequence is that of Kallistatin (SERPINA4) from Pongo abelii (Sumatran orangutan).